The primary structure comprises 860 residues: Leucine--tRNA ligase (860 aa).

The short motif at proline 42–histidine 52 is the 'HIGH' region element. The short motif at lysine 619–serine 623 is the 'KMSKS' region element. Lysine 622 serves as a coordination point for ATP.

It belongs to the class-I aminoacyl-tRNA synthetase family.

The protein localises to the cytoplasm. It catalyses the reaction tRNA(Leu) + L-leucine + ATP = L-leucyl-tRNA(Leu) + AMP + diphosphate. The chain is Leucine--tRNA ligase from Pectobacterium carotovorum subsp. carotovorum (strain PC1).